We begin with the raw amino-acid sequence, 468 residues long: Cysteine--tRNA ligase (468 aa).

Residue Cys-27 coordinates Zn(2+). The short motif at Pro-29–His-39 is the 'HIGH' region element. Cys-204, His-234, and Glu-238 together coordinate Zn(2+). The short motif at Lys-266–Ser-270 is the 'KMSKS' region element. Lys-269 provides a ligand contact to ATP.

The protein belongs to the class-I aminoacyl-tRNA synthetase family. In terms of assembly, monomer. Requires Zn(2+) as cofactor.

The protein localises to the cytoplasm. The enzyme catalyses tRNA(Cys) + L-cysteine + ATP = L-cysteinyl-tRNA(Cys) + AMP + diphosphate. The polypeptide is Cysteine--tRNA ligase (Campylobacter hominis (strain ATCC BAA-381 / DSM 21671 / CCUG 45161 / LMG 19568 / NCTC 13146 / CH001A)).